A 159-amino-acid chain; its full sequence is Ribosomal RNA large subunit methyltransferase H (159 aa).

Residues Leu-76, Gly-107, and 126–131 contribute to the S-adenosyl-L-methionine site; that span reads LSKLTM.

It belongs to the RNA methyltransferase RlmH family. As to quaternary structure, homodimer.

The protein localises to the cytoplasm. The enzyme catalyses pseudouridine(1915) in 23S rRNA + S-adenosyl-L-methionine = N(3)-methylpseudouridine(1915) in 23S rRNA + S-adenosyl-L-homocysteine + H(+). Its function is as follows. Specifically methylates the pseudouridine at position 1915 (m3Psi1915) in 23S rRNA. The chain is Ribosomal RNA large subunit methyltransferase H from Acinetobacter baumannii (strain AB307-0294).